We begin with the raw amino-acid sequence, 232 residues long: MIYDFLLSLGFISRIPINIKVKAFEVRVKRLPIYFPLVGYIPGILFFFGGSFENFLLKILFLILGYYFFDLFHFDGFLDTLDGFLNQSSKEKRLEIMSKGDVGPFAVFFGTLYVVVFWTLYLEIPPITFIYSSVFGRYSMNLLMFFSKPAKKTGLGALFFPFQKKNLLFSSFFLLPLLFSMKYFFISYVVTVVFSYLMSIVSNSKIGGVTGDVLGGACLMTNGLLLVVLGVV.

The next 6 helical transmembrane spans lie at 32–52 (PIYF…GGSF), 54–74 (NFLL…LFHF), 102–122 (VGPF…TLYL), 126–146 (PITF…LMFF), 172–192 (FFLL…VVTV), and 212–232 (DVLG…LGVV).

The protein belongs to the CobS family. Mg(2+) is required as a cofactor.

The protein resides in the cell inner membrane. It carries out the reaction alpha-ribazole + adenosylcob(III)inamide-GDP = adenosylcob(III)alamin + GMP + H(+). It catalyses the reaction alpha-ribazole 5'-phosphate + adenosylcob(III)inamide-GDP = adenosylcob(III)alamin 5'-phosphate + GMP + H(+). It functions in the pathway cofactor biosynthesis; adenosylcobalamin biosynthesis; adenosylcobalamin from cob(II)yrinate a,c-diamide: step 7/7. Joins adenosylcobinamide-GDP and alpha-ribazole to generate adenosylcobalamin (Ado-cobalamin). Also synthesizes adenosylcobalamin 5'-phosphate from adenosylcobinamide-GDP and alpha-ribazole 5'-phosphate. The chain is Adenosylcobinamide-GDP ribazoletransferase from Thermosipho melanesiensis (strain DSM 12029 / CIP 104789 / BI429).